The sequence spans 934 residues: Serine/threonine-protein kinase atg1 (934 aa).

One can recognise a Protein kinase domain in the interval 22–328 (YTRLDEIGRG…SDFFDCDTIT (307 aa)). ATP-binding positions include 28 to 36 (IGRGSFATV) and lysine 51. The active-site Proton acceptor is aspartate 165. 6 disordered regions span residues 335-432 (IADD…PRRP), 462-481 (RNTY…TKEE), 531-580 (RRPG…YGQS), 684-703 (TDPS…TDLT), 800-822 (RLPP…GSGA), and 878-900 (EEEE…RRDG). The segment covering 340–368 (PSTSRRSSVAVNTSGSTSRPQSRTGSRTP) has biased composition (polar residues). Over residues 371–386 (MKREKDASYPGKKDDQ) the composition is skewed to basic and acidic residues. Positions 538–550 (SSTATATSPLATT) are enriched in low complexity. Residues 561–577 (ARADSTHTRQGSYERRY) show a composition bias toward basic and acidic residues.

Belongs to the protein kinase superfamily. Ser/Thr protein kinase family. APG1/unc-51/ULK1 subfamily. Homodimer. Forms a ternary complex with ATG13 and ATG17.

The protein resides in the cytoplasm. The protein localises to the preautophagosomal structure membrane. It carries out the reaction L-seryl-[protein] + ATP = O-phospho-L-seryl-[protein] + ADP + H(+). The enzyme catalyses L-threonyl-[protein] + ATP = O-phospho-L-threonyl-[protein] + ADP + H(+). In terms of biological role, serine/threonine protein kinase involved in the cytoplasm to vacuole transport (Cvt) and found to be essential in autophagy, where it is required for the formation of autophagosomes. Involved in the clearance of protein aggregates which cannot be efficiently cleared by the proteasome. Required for selective autophagic degradation of the nucleus (nucleophagy) as well as for mitophagy which contributes to regulate mitochondrial quantity and quality by eliminating the mitochondria to a basal level to fulfill cellular energy requirements and preventing excess ROS production. Also involved in endoplasmic reticulum-specific autophagic process, in selective removal of ER-associated degradation (ERAD) substrates. Plays a key role in ATG9 and ATG23 cycling through the pre-autophagosomal structure and is necessary to promote ATG18 binding to ATG9 through phosphorylation of ATG9. Catalyzes phosphorylation of ATG4, decreasing the interaction between ATG4 and ATG8 and impairing deconjugation of PE-conjugated forms of ATG8. Required for conidiation and development of aerial hyphae. The chain is Serine/threonine-protein kinase atg1 from Aspergillus oryzae (strain ATCC 42149 / RIB 40) (Yellow koji mold).